The primary structure comprises 314 residues: MRILFMGTPEFAVPSLRAVAGAGPGFEVVMVVTGPDRPRRSRNSAPEPTPVKQAALELGLRVLEVEDVKDPAFASTVQELRPDVIVVAAFRILPPAVYGAARLGSFNLHASLLPAYRGAAPINHALMQGDRESGVTTFFLQQQVDTGNIILKRSTPVGSDENATELALRLSFIGAEAVLATLRLIAEGRADVSLQDESMASKAPKLTRQNTRIDWNRSAADLHNFIRGLSMRPAAWTTLGGKSVKIFRSAAAPQMSPSSPCAPGSLLIDDGRLYARGTDGWIELLLLQLEGKRPMEAPEFVRGFRPEVTEPQLV.

111-114 (SLLP) is a (6S)-5,6,7,8-tetrahydrofolate binding site.

It belongs to the Fmt family.

It catalyses the reaction L-methionyl-tRNA(fMet) + (6R)-10-formyltetrahydrofolate = N-formyl-L-methionyl-tRNA(fMet) + (6S)-5,6,7,8-tetrahydrofolate + H(+). In terms of biological role, attaches a formyl group to the free amino group of methionyl-tRNA(fMet). The formyl group appears to play a dual role in the initiator identity of N-formylmethionyl-tRNA by promoting its recognition by IF2 and preventing the misappropriation of this tRNA by the elongation apparatus. In Chlorobium luteolum (strain DSM 273 / BCRC 81028 / 2530) (Pelodictyon luteolum), this protein is Methionyl-tRNA formyltransferase.